The sequence spans 448 residues: Allantoinase (448 aa).

6 residues coordinate Zn(2+): histidine 60, histidine 62, lysine 147, histidine 183, histidine 239, and aspartate 312. Lysine 147 is subject to N6-carboxylysine.

It belongs to the metallo-dependent hydrolases superfamily. Allantoinase family. In terms of assembly, homotetramer. Zn(2+) is required as a cofactor. Post-translationally, carboxylation allows a single lysine to coordinate two zinc ions.

It carries out the reaction (S)-allantoin + H2O = allantoate + H(+). Its pathway is nitrogen metabolism; (S)-allantoin degradation; allantoate from (S)-allantoin: step 1/1. Its function is as follows. Catalyzes the conversion of allantoin (5-ureidohydantoin) to allantoic acid by hydrolytic cleavage of the five-member hydantoin ring. The sequence is that of Allantoinase from Deinococcus radiodurans (strain ATCC 13939 / DSM 20539 / JCM 16871 / CCUG 27074 / LMG 4051 / NBRC 15346 / NCIMB 9279 / VKM B-1422 / R1).